The sequence spans 344 residues: Phosphate acyltransferase (344 aa).

Belongs to the PlsX family. In terms of assembly, homodimer. Probably interacts with PlsY.

It localises to the cytoplasm. The catalysed reaction is a fatty acyl-[ACP] + phosphate = an acyl phosphate + holo-[ACP]. Its pathway is lipid metabolism; phospholipid metabolism. Its function is as follows. Catalyzes the reversible formation of acyl-phosphate (acyl-PO(4)) from acyl-[acyl-carrier-protein] (acyl-ACP). This enzyme utilizes acyl-ACP as fatty acyl donor, but not acyl-CoA. This Sphingopyxis alaskensis (strain DSM 13593 / LMG 18877 / RB2256) (Sphingomonas alaskensis) protein is Phosphate acyltransferase.